A 179-amino-acid polypeptide reads, in one-letter code: M-zodatoxin-Lt4b (179 aa).

An N-terminal signal peptide occupies residues 1–22; it reads MKFSIIALALAVAFVCVAESRS. A propeptide spanning residues 23-43 is cleaved from the precursor; sequence EEEGYDVSEEIQAEELEEAAR. The short motif at 40–43 is the Processing quadruplet motif 1 element; the sequence is EAAR. Glutamine amide is present on Gln61. The Inverted processing quadruplet motif 1 motif lies at 63–66; it reads REDS. Positions 63–71 are excised as a propeptide; that stretch reads REDSEDAGR. The Processing quadruplet motif 2 signature appears at 68–71; sequence DAGR. The residue at position 89 (Gln89) is a Glutamine amide. The Inverted processing quadruplet motif 2 signature appears at 91 to 94; it reads REDT. A propeptide spanning residues 91-99 is cleaved from the precursor; sequence REDTEEAGR. The Processing quadruplet motif 3 signature appears at 96 to 99; it reads EAGR. Gln117 carries the glutamine amide modification. The short motif at 119-122 is the Inverted processing quadruplet motif 3 element; the sequence is REDS. A propeptide spanning residues 119–127 is cleaved from the precursor; it reads REDSEEAGR. A Processing quadruplet motif 4 motif is present at residues 124–127; that stretch reads EAGR. Gln145 carries the glutamine amide modification. Positions 147–150 match the Inverted processing quadruplet motif 4 motif; that stretch reads REDT. The propeptide occupies 147–154; the sequence is REDTEEAR. Residues 151–154 carry the Processing quadruplet motif 5 motif; the sequence is EEAR. Residue Phe178 is modified to Phenylalanine amide.

This sequence belongs to the cationic peptide 03 (latarcin) family. 04 subfamily. Post-translationally, cleavage of the propeptide depends on the processing quadruplet motif (PQM) (XXXR, with at least one of X being E) and the inverted PQM (RXXX, with at least one of X being E). Expressed by the venom gland.

The protein resides in the secreted. Functionally, M-zodatoxin-Lt4b: Has antimicrobial activity against Gram-positive bacteria (A.globiformis VKM Ac-1112 (MIC=0.3 uM), and B.subtilis VKM B-501 (MIC=1.1 uM)), Gram-negative bacteria (E.coli DH5-alpha (MIC=4.4 uM), E.coli MH1 (MIC=4.4 uM), and P.aeruginosa PAO1 (MIC=&gt;35 uM)), and yeasts (P.pastoris GS115 (MIC=&gt;35 uM), and S.cerevisiae Y190 (MIC=35 uM)). Does not have hemolytic activity against rabbit erythrocytes. Causes paralysis, but is not lethal when injected into insect (M.domestica) larvae. Shows no antimicrobial activity against Gram-positive bacterium B.subtilis B-501 or Gram-negative bacterium E.coli DH5-alpha at concentration up to 20 uM. The chain is M-zodatoxin-Lt4b from Lachesana tarabaevi (Spider).